The chain runs to 471 residues: Ribulose bisphosphate carboxylase large chain (471 aa).

Substrate is bound by residues Asn-115 and Thr-165. The active-site Proton acceptor is Lys-167. Position 169 (Lys-169) interacts with substrate. Mg(2+) contacts are provided by Lys-193, Asp-195, and Glu-196. N6-carboxylysine is present on Lys-193. The active-site Proton acceptor is the His-286. Substrate-binding residues include Arg-287, His-319, and Ser-371.

It belongs to the RuBisCO large chain family. Type I subfamily. As to quaternary structure, heterohexadecamer of 8 large chains and 8 small chains. Mg(2+) serves as cofactor.

It is found in the carboxysome. The catalysed reaction is 2 (2R)-3-phosphoglycerate + 2 H(+) = D-ribulose 1,5-bisphosphate + CO2 + H2O. It carries out the reaction D-ribulose 1,5-bisphosphate + O2 = 2-phosphoglycolate + (2R)-3-phosphoglycerate + 2 H(+). In terms of biological role, ruBisCO catalyzes two reactions: the carboxylation of D-ribulose 1,5-bisphosphate, the primary event in carbon dioxide fixation, as well as the oxidative fragmentation of the pentose substrate in the photorespiration process. Both reactions occur simultaneously and in competition at the same active site. The protein is Ribulose bisphosphate carboxylase large chain of Synechococcus sp. (strain CC9605).